The primary structure comprises 206 residues: MDPTASGRQAPRNPRQATVQRETKETSVSVALVVDGTGTVDIDTGVPFYDHMLAQLGKHAGFDLTVVTRGDLDVDAHHTVEDTALALGQAFREALGDKAGIRRFGDALVPLDEALCQVAVDLSGRPYLVHSEPEMVELIGTYETTLTRHVWESFVAQAHICLHIQVLAGRNAHHINEVQFKAVARALRDAVRLDGVAGVPSTKGAL.

Residues 1–24 (MDPTASGRQAPRNPRQATVQRETK) form a disordered region.

The protein belongs to the imidazoleglycerol-phosphate dehydratase family.

The protein localises to the cytoplasm. It carries out the reaction D-erythro-1-(imidazol-4-yl)glycerol 3-phosphate = 3-(imidazol-4-yl)-2-oxopropyl phosphate + H2O. It functions in the pathway amino-acid biosynthesis; L-histidine biosynthesis; L-histidine from 5-phospho-alpha-D-ribose 1-diphosphate: step 6/9. This chain is Imidazoleglycerol-phosphate dehydratase, found in Acidothermus cellulolyticus (strain ATCC 43068 / DSM 8971 / 11B).